A 1895-amino-acid polypeptide reads, in one-letter code: 1,3-beta-glucan synthase component GSC2 (1895 aa).

Composition is skewed to polar residues over residues 1–16 and 25–34; these read MSYN…YSNG and PTYQVTQDQS. 2 disordered regions span residues 1–143 and 269–292; these read MSYN…PYGN and ARKA…EETL. Residues 1–473 lie on the Extracellular side of the membrane; sequence MSYNDPNLNG…WLHLVTNFNR (473 aa). Residues 65-78 are compositionally biased toward low complexity; that stretch reads QFPQGQDPSQDQGP. 2 stretches are compositionally biased toward polar residues: residues 79–107 and 115–141; these read YNND…SDFS and TYPN…STPY. A compositionally biased stretch (basic residues) spans 269 to 278; that stretch reads ARKAKKKNKK. K278 participates in a covalent cross-link: Glycyl lysine isopeptide (Lys-Gly) (interchain with G-Cter in ubiquitin). T288 and T291 each carry phosphothreonine. K405 participates in a covalent cross-link: Glycyl lysine isopeptide (Lys-Gly) (interchain with G-Cter in ubiquitin). A helical membrane pass occupies residues 474–494; that stretch reads IWIMHISVYWMYCAYNAPTFY. The Cytoplasmic portion of the chain corresponds to 495 to 511; that stretch reads THNYQQLVDNQPLAAYK. The helical transmembrane segment at 512–532 threads the bilayer; the sequence is WATAALGGTVASLIQVAATLC. Over 533–550 the chain is Extracellular; that stretch reads EWSFVPRKWAGAQHLSRR. The helical transmembrane segment at 551 to 571 threads the bilayer; it reads FWFLCVIMGINLGPVIFVFAY. Residues 572–582 are Cytoplasmic-facing; sequence DKDTVYSTAAH. Residues 583-603 traverse the membrane as a helical segment; that stretch reads VVGAVMFFVAVATLVFFSVMP. Residues 604–1579 are Extracellular-facing; it reads LGGLFTSYMK…DASRAHRTNL (976 aa). Residues K929, K934, K1558, and K1566 each participate in a glycyl lysine isopeptide (Lys-Gly) (interchain with G-Cter in ubiquitin) cross-link. The helical transmembrane segment at 1580–1600 threads the bilayer; the sequence is IMAEIIPCAIYAAGCFIAFTF. Topologically, residues 1601 to 1620 are cytoplasmic; sequence INAQTGVKTTDEDRVNSTLR. The chain crosses the membrane as a helical span at residues 1621 to 1641; it reads IIICTLAPIVIDIGVLFFCMG. The Extracellular segment spans residues 1642 to 1758; the sequence is LSCCSGPLLG…LTAKVIELSE (117 aa). Residues 1759-1779 traverse the membrane as a helical segment; the sequence is FAADFVLGHVILIFQLPVICI. The Cytoplasmic portion of the chain corresponds to 1780–1821; it reads PKIDKFHSIMLFWLKPSRQIRPPIYSLKQARLRKRMVRRYCS. The helical transmembrane segment at 1822 to 1842 threads the bilayer; that stretch reads LYFLVLIIFAGCIVGPAVASA. Over 1843–1895 the chain is Extracellular; that stretch reads HVPKDLGSGLTGTFHNLVQPRNVSNNDTGSQMSTYKSHYYTHTPSLKTWSTIK.

The protein belongs to the glycosyltransferase 48 family. Component of the 1,3-beta-glucan synthase (GS) complex, composed of two alternate catalytic subunits FKS1 or GSC2, and a regulatory subunit RHO1. Interacts with SMK1.

The protein localises to the membrane. The catalysed reaction is [(1-&gt;3)-beta-D-glucosyl](n) + UDP-alpha-D-glucose = [(1-&gt;3)-beta-D-glucosyl](n+1) + UDP + H(+). Alternate catalytic subunit of the 1,3-beta-glucan synthase (GS) complex. Synthesizes 1,3-beta-glucan, a major structural component of the yeast cell wall. Required for spore wall assembly. Negative regulation of activity by SMK1 is important for spore wall deposition. Activity is positively regulated by RHO1. In Saccharomyces cerevisiae (strain ATCC 204508 / S288c) (Baker's yeast), this protein is 1,3-beta-glucan synthase component GSC2.